Reading from the N-terminus, the 131-residue chain is Small ribosomal subunit protein uS8 (131 aa).

This sequence belongs to the universal ribosomal protein uS8 family. In terms of assembly, part of the 30S ribosomal subunit. Contacts proteins S5 and S12.

One of the primary rRNA binding proteins, it binds directly to 16S rRNA central domain where it helps coordinate assembly of the platform of the 30S subunit. This is Small ribosomal subunit protein uS8 from Sorangium cellulosum (strain So ce56) (Polyangium cellulosum (strain So ce56)).